A 185-amino-acid polypeptide reads, in one-letter code: Elongation factor P (185 aa).

This sequence belongs to the elongation factor P family.

It is found in the cytoplasm. It participates in protein biosynthesis; polypeptide chain elongation. Involved in peptide bond synthesis. Stimulates efficient translation and peptide-bond synthesis on native or reconstituted 70S ribosomes in vitro. Probably functions indirectly by altering the affinity of the ribosome for aminoacyl-tRNA, thus increasing their reactivity as acceptors for peptidyl transferase. The polypeptide is Elongation factor P (Mesoplasma florum (strain ATCC 33453 / NBRC 100688 / NCTC 11704 / L1) (Acholeplasma florum)).